The chain runs to 674 residues: RNA polymerase sigma factor RpoD (674 aa).

The interval 214 to 252 (AEGAAPAARRPASDEPEYDADGNPISRIDEEEDDDDSSN) is disordered. The segment at 440–510 (MVEANLRLVI…TRSIADQART (71 aa)) is sigma-70 factor domain-2. The short motif at 464 to 467 (DLIQ) is the Interaction with polymerase core subunit RpoC element. The interval 519–595 (ETINKLVRTG…DKNAILPLDS (77 aa)) is sigma-70 factor domain-3. The sigma-70 factor domain-4 stretch occupies residues 608 to 661 (VLASLTPREERVLRMRFGIGMNTDHTLEEVGQQFSVTRERIRQIEAKALRKLKH). The segment at residues 634-653 (LEEVGQQFSVTRERIRQIEA) is a DNA-binding region (H-T-H motif).

The protein belongs to the sigma-70 factor family. RpoD/SigA subfamily. In terms of assembly, interacts transiently with the RNA polymerase catalytic core.

It localises to the cytoplasm. In terms of biological role, sigma factors are initiation factors that promote the attachment of RNA polymerase to specific initiation sites and are then released. This sigma factor is the primary sigma factor during exponential growth. In Rhodobacter capsulatus (strain ATCC BAA-309 / NBRC 16581 / SB1003), this protein is RNA polymerase sigma factor RpoD.